Reading from the N-terminus, the 652-residue chain is tRNA 5-methylaminomethyl-2-thiouridine biosynthesis bifunctional protein MnmC (652 aa).

The interval 1–227 (MLSWKNDLTP…KREMLTGKYS (227 aa)) is tRNA (mnm(5)s(2)U34)-methyltransferase. Residues 259–652 (IGAGIAGSTL…ARFLYRRIRK (394 aa)) form an FAD-dependent cmnm(5)s(2)U34 oxidoreductase region.

It in the N-terminal section; belongs to the methyltransferase superfamily. tRNA (mnm(5)s(2)U34)-methyltransferase family. This sequence in the C-terminal section; belongs to the DAO family. FAD serves as cofactor.

It is found in the cytoplasm. The catalysed reaction is 5-aminomethyl-2-thiouridine(34) in tRNA + S-adenosyl-L-methionine = 5-methylaminomethyl-2-thiouridine(34) in tRNA + S-adenosyl-L-homocysteine + H(+). Functionally, catalyzes the last two steps in the biosynthesis of 5-methylaminomethyl-2-thiouridine (mnm(5)s(2)U) at the wobble position (U34) in tRNA. Catalyzes the FAD-dependent demodification of cmnm(5)s(2)U34 to nm(5)s(2)U34, followed by the transfer of a methyl group from S-adenosyl-L-methionine to nm(5)s(2)U34, to form mnm(5)s(2)U34. The protein is tRNA 5-methylaminomethyl-2-thiouridine biosynthesis bifunctional protein MnmC of Leptospira borgpetersenii serovar Hardjo-bovis (strain JB197).